Here is a 3767-residue protein sequence, read N- to C-terminus: Transmembrane cell adhesion receptor mua-3 (3767 aa).

Positions 1-24 (MQAGISIFFLFLHIPIFFVNCSNS) are cleaved as a signal peptide. Topologically, residues 25-3417 (TSCVAREEFQ…CQVAPSNASL (3393 aa)) are extracellular. The 38-residue stretch at 26-63 (SCVAREEFQCKMDDSCISMKKWQDGVDDCYDGSDEVCL) folds into the LDL-receptor class A 1 domain. Intrachain disulfides connect C27/C41, C35/C54, C62/C76, C69/C89, C97/C110, C104/C123, C131/C144, C138/C157, C165/C179, and C172/C192. 3 LDL-receptor class A domains span residues 96–132 (GCPAHYFVCRDRSACIEPSKYLNGVADCKDKSDEPCA), 133–166 (QNQFQCSDGTKCIPKAQFQDGKEDCDDGSDEECT), and 167–209 (TSQF…ANCT). N-linked (GlcNAc...) asparagine glycosylation is found at N201 and N207. 17 consecutive EGF-like domains span residues 225–268 (KLKF…DKCI), 375–416 (NRDD…GTCR), 418–466 (LIDE…RKCR), 468–517 (LINE…RNCT), 519–566 (AINE…RKCV), 614–663 (RANP…RKCV), 665–713 (AVDE…RSCK), 714–760 (KADM…RVCR), 762–810 (VVNE…KNCV), 816–860 (DPPE…GRCV), 861–908 (VINE…RICR), 910–961 (RVNE…RRCI), 963–1012 (AVNE…RICT), 1029–1070 (TDDG…GSCR), 1071–1118 (VYSA…RICK), 1120–1168 (LINE…RQCT), and 1170–1219 (SNNE…RVCT). 51 disulfides stabilise this stretch: C229–C243, C235–C252, C254–C267, C381–C392, C386–C402, C404–C415, C422–C435, C429–C444, C446–C465, C472–C486, C480–C495, C497–C516, C523–C536, C530–C545, C547–C565, C618–C632, C626–C642, C644–C662, C669–C682, C676–C691, C693–C712, C718–C729, C723–C738, C740–C759, C766–C779, C773–C788, C790–C809, C820–C836, C828–C845, C847–C859, C865–C879, C873–C888, C890–C907, C914–C930, C924–C939, C941–C960, C967–C981, C975–C990, C992–C1011, C1033–C1046, C1040–C1055, C1057–C1069, C1075–C1087, C1081–C1096, C1098–C1117, C1124–C1137, C1131–C1146, C1148–C1167, C1174–C1188, C1182–C1197, and C1199–C1218. Residue N383 is glycosylated (N-linked (GlcNAc...) asparagine). N-linked (GlcNAc...) asparagine glycosylation is present at N515. Positions 1230–1406 (DLVFLIDGSG…DLDTRLRSMI (177 aa)) constitute a VWFA domain. Residue N1350 is glycosylated (N-linked (GlcNAc...) asparagine). EGF-like domains follow at residues 1421–1466 (SEDV…RVCG), 1466–1510 (GGDL…GFCV), 1521–1562 (HDAN…GQCA), 1563–1608 (YPGS…DICL), 1608–1656 (LKNE…RVCV), 1658–1706 (LQNE…MVCK), 1708–1755 (LVNE…RRCE), 1759–1807 (TNDK…RLCI), 1809–1860 (VIPE…RLCK), 1862–1911 (LQNE…RKCK), 1913–1961 (LINE…RRCL), 1963–2011 (RINE…RICR), 2014–2062 (LVDE…RLCQ), 2068–2112 (PPPE…GSCS), 2113–2160 (IINE…RMCK), 2162–2208 (MVNE…RICK), 2210–2258 (LTNE…RACR), 2260–2308 (LVNE…RVCL), 2310–2358 (FINE…RVCV), 2360–2408 (LVDE…RVCS), 2409–2455 (APEV…RVCV), 2456–2504 (RNNA…RVCE), 2513–2563 (PRHP…RLCV), 2565–2616 (TEPV…RICK), 2618–2666 (LINE…RICS), 2668–2714 (SVNE…HRCS), 2716–2763 (MINE…RICR), 2763–2811 (RLNE…RICI), and 2833–2872 (REFPCGRDDCIKARGEVCISGEYCGCKPGEGRSASTGKCQ). 66 cysteine pairs are disulfide-bonded: C1425/C1441, C1433/C1450, C1452/C1465, C1470/C1484, C1478/C1494, C1496/C1509, C1525/C1538, C1532/C1547, C1549/C1561, C1567/C1583, C1575/C1592, C1594/C1607, C1612/C1625, C1619/C1634, C1636/C1655, C1662/C1675, C1669/C1684, C1686/C1705, C1712/C1726, C1720/C1735, C1737/C1754, C1763/C1776, C1770/C1786, C1788/C1806, C1813/C1829, C1821/C1838, C1840/C1859, C1866/C1880, C1873/C1889, C1891/C1910, C1917/C1930, C1924/C1939, C1941/C1960, C1967/C1980, C1974/C1989, C1991/C2010, C2018/C2031, C2025/C2040, C2042/C2061, C2072/C2088, C2080/C2097, C2099/C2111, C2117/C2131, C2125/C2140, C2142/C2159, C2166/C2180, C2174/C2189, C2191/C2207, C2214/C2228, C2222/C2237, C2239/C2257, C2264/C2278, C2272/C2287, C2289/C2307, C2314/C2327, C2321/C2336, C2338/C2357, C2364/C2377, C2371/C2386, C2388/C2407, C2413/C2425, C2419/C2435, C2437/C2454, C2460/C2474, C2468/C2483, and C2485/C2503. Positions 2492-2521 (RSPDSSQRGRVCEPPPPPSPPPRHPCQDPE) are disordered. Residues 2504-2515 (EPPPPPSPPPRH) are compositionally biased toward pro residues. Cystine bridges form between C2517-C2531, C2525-C2541, C2543-C2562, C2569-C2583, C2577-C2594, C2596-C2615, C2622-C2636, C2630-C2645, C2647-C2665, C2672-C2686, C2680-C2695, C2697-C2713, C2720-C2734, C2728-C2743, C2745-C2762, C2767-C2781, C2775-C2790, C2792-C2810, C2837-C2850, C2842-C2856, and C2858-C2871. The 127-residue stretch at 2873-2999 (EVQETPFELR…GSLRVASDTD (127 aa)) folds into the SEA 1 domain. The N-linked (GlcNAc...) asparagine glycan is linked to N2944. The region spanning 3009-3048 (EWGNCGGMSCKEHLKEVCIAGHICGCPDGMKRRDANSECR) is the EGF-like 47 domain. 3 disulfides stabilise this stretch: C3013-C3026, C3018-C3032, and C3034-C3047. The SEA 2 domain maps to 3049 to 3174 (VVESWNVPLW…SELYLNPTQP (126 aa)). Residues N3120 and N3130 are each glycosylated (N-linked (GlcNAc...) asparagine). EGF-like domains are found at residues 3176-3220 (PFNP…KKCL), 3224-3272 (GFNE…SLCV), and 3272-3324 (VLDY…TLCM). 15 cysteine pairs are disulfide-bonded: C3180–C3191, C3185–C3201, C3203–C3219, C3228–C3242, C3236–C3251, C3253–C3271, C3276–C3288, C3282–C3297, C3299–C3323, C3332–C3345, C3339–C3354, C3356–C3372, C3377–C3386, C3380–C3397, and C3399–C3408. The N-linked (GlcNAc...) asparagine glycan is linked to N3285. The region spanning 3328–3373 (DVDECALGLNNCSGVAHCIDRAVGYTCKCPDGYIDGNPDEPGRVCG) is the EGF-like 51; calcium-binding domain. An N-linked (GlcNAc...) asparagine; atypical glycan is attached at N3337. N3338 carries an N-linked (GlcNAc...) asparagine glycan. Positions 3373-3409 (GALLCDLCNAHGDCVHNTATNNITCVCTDGWTGPQCQ) constitute an EGF-like 52 domain. A glycan (N-linked (GlcNAc...) asparagine) is linked at N3394. An N-linked (GlcNAc...) asparagine glycan is attached at N3414. The chain crosses the membrane as a helical span at residues 3418–3438 (VLLILLALLFLLLTLCCLLYF). The Cytoplasmic portion of the chain corresponds to 3439-3767 (CTKCHCFKGR…SQTSTHVTKK (329 aa)). Positions 3582–3729 (TTTTDEQGNT…EEDVEHSVGD (148 aa)) are disordered. The span at 3588–3597 (QGNTIVTTTE) shows a compositional bias: polar residues. Over residues 3630–3665 (QSQSQQQQSMSQGMSQSMSQHATSAGYSSSGMESSA) the composition is skewed to low complexity. The span at 3675–3684 (HTGERERGGS) shows a compositional bias: basic and acidic residues. Over residues 3690–3702 (IGRARGMAAASSG) the composition is skewed to low complexity.

In terms of tissue distribution, expressed in the hypodermis at the sites of muscle contact, in striated muscles including body wall muscles, the anal sphincter muscles and the junctions between the anal sphincter muscle and rectal cuticle. Also expressed in non-muscle cells including the excretory duct cell and pore cells.

The protein localises to the cell membrane. It localises to the cell junction. Its subcellular location is the hemidesmosome. In terms of biological role, involved in cell adhesion and required for organ positioning and attachment. At the hypodermal surface, required for attachment of the hypdermermis to the basal cuticle in postembryonic development, possibly through intermediate filaments of the cytoskeleton. This chain is Transmembrane cell adhesion receptor mua-3, found in Caenorhabditis elegans.